The primary structure comprises 227 residues: Cytochrome c oxidase subunit 2 (227 aa).

Topologically, residues 1–22 are mitochondrial intermembrane; that stretch reads MAYPFQLGLQDATSPIMEELMN. The chain crosses the membrane as a helical span at residues 23–44; it reads FHDHTLMIVFLISSLVLYIISL. Over 45-60 the chain is Mitochondrial matrix; sequence MLTTKLTHTSTMDAQE. Residues 61 to 81 traverse the membrane as a helical segment; that stretch reads VETIWTILPAVILIMIALPSL. Topologically, residues 82 to 227 are mitochondrial intermembrane; it reads RILYMMDEIN…YFENWSASMI (146 aa). Residues H161, C196, E198, C200, H204, and M207 each coordinate Cu cation. Position 198 (E198) interacts with Mg(2+). Y218 carries the phosphotyrosine modification.

Belongs to the cytochrome c oxidase subunit 2 family. In terms of assembly, component of the cytochrome c oxidase (complex IV, CIV), a multisubunit enzyme composed of 14 subunits. The complex is composed of a catalytic core of 3 subunits MT-CO1, MT-CO2 and MT-CO3, encoded in the mitochondrial DNA, and 11 supernumerary subunits COX4I, COX5A, COX5B, COX6A, COX6B, COX6C, COX7A, COX7B, COX7C, COX8 and NDUFA4, which are encoded in the nuclear genome. The complex exists as a monomer or a dimer and forms supercomplexes (SCs) in the inner mitochondrial membrane with NADH-ubiquinone oxidoreductase (complex I, CI) and ubiquinol-cytochrome c oxidoreductase (cytochrome b-c1 complex, complex III, CIII), resulting in different assemblies (supercomplex SCI(1)III(2)IV(1) and megacomplex MCI(2)III(2)IV(2)). Found in a complex with TMEM177, COA6, COX18, COX20, SCO1 and SCO2. Interacts with TMEM177 in a COX20-dependent manner. Interacts with COX20. Interacts with COX16. Cu cation is required as a cofactor.

It localises to the mitochondrion inner membrane. The catalysed reaction is 4 Fe(II)-[cytochrome c] + O2 + 8 H(+)(in) = 4 Fe(III)-[cytochrome c] + 2 H2O + 4 H(+)(out). In terms of biological role, component of the cytochrome c oxidase, the last enzyme in the mitochondrial electron transport chain which drives oxidative phosphorylation. The respiratory chain contains 3 multisubunit complexes succinate dehydrogenase (complex II, CII), ubiquinol-cytochrome c oxidoreductase (cytochrome b-c1 complex, complex III, CIII) and cytochrome c oxidase (complex IV, CIV), that cooperate to transfer electrons derived from NADH and succinate to molecular oxygen, creating an electrochemical gradient over the inner membrane that drives transmembrane transport and the ATP synthase. Cytochrome c oxidase is the component of the respiratory chain that catalyzes the reduction of oxygen to water. Electrons originating from reduced cytochrome c in the intermembrane space (IMS) are transferred via the dinuclear copper A center (CU(A)) of subunit 2 and heme A of subunit 1 to the active site in subunit 1, a binuclear center (BNC) formed by heme A3 and copper B (CU(B)). The BNC reduces molecular oxygen to 2 water molecules using 4 electrons from cytochrome c in the IMS and 4 protons from the mitochondrial matrix. The chain is Cytochrome c oxidase subunit 2 (Mtco2) from Mus musculus (Mouse).